We begin with the raw amino-acid sequence, 478 residues long: MLARHHHPIVAIATAPGRGGVGIVRLSGQRIAPVVQALCGRKLSPRQATYLPFRDAHGQIIDKGLAIFFPAPHSYTGEDVLELQAHGGPVVLQLLLARCLEAGAALDPATGQPVLAQLRVAEPGEFTERAFLNDKIDLAQAEAIADLIDASTETAARSAARSMSGEFSQAVNTLLEQLIHLRMLVEATLDFPEEDIDFLQQADAQGQLLRLQATLASVLARATQGAILREGIKVVIAGQPNVGKSSLLNALAGAELAIVTPVAGTTRDKVSQLIQIEGVPLHVVDTAGLREALDEVEKIGIQRAWTEIESADAVLFLHDLARHDATENPLYAINYIADDARLQSALALKLPKNTAIIDVWNKSDMAGPELLRQVNGGVLISAKTGAGLQALREQLLRVVGWQAAPEGVFMARERHVSALRSVQIQLLTAQNQLQAAVPALDLLAEDLRQAQLHLSSITGAFNADDLLGEIFSKFCIGK.

Positions 25, 82, and 135 each coordinate (6S)-5-formyl-5,6,7,8-tetrahydrofolate. The 170-residue stretch at 231 to 400 (GIKVVIAGQP…LREQLLRVVG (170 aa)) folds into the TrmE-type G domain. Position 241 (Asn241) interacts with K(+). GTP is bound by residues 241-246 (NVGKSS), 260-266 (TPVAGTT), and 285-288 (DTAG). A Mg(2+)-binding site is contributed by Ser245. K(+) is bound by residues Thr260, Val262, and Thr265. Mg(2+) is bound at residue Thr266. Lys478 serves as a coordination point for (6S)-5-formyl-5,6,7,8-tetrahydrofolate.

This sequence belongs to the TRAFAC class TrmE-Era-EngA-EngB-Septin-like GTPase superfamily. TrmE GTPase family. As to quaternary structure, homodimer. Heterotetramer of two MnmE and two MnmG subunits. It depends on K(+) as a cofactor.

It localises to the cytoplasm. In terms of biological role, exhibits a very high intrinsic GTPase hydrolysis rate. Involved in the addition of a carboxymethylaminomethyl (cmnm) group at the wobble position (U34) of certain tRNAs, forming tRNA-cmnm(5)s(2)U34. This Polaromonas naphthalenivorans (strain CJ2) protein is tRNA modification GTPase MnmE.